Consider the following 185-residue polypeptide: AP-3 complex subunit sigma (185 aa).

This sequence belongs to the adaptor complexes small subunit family. In terms of assembly, adaptor protein complex 3 (AP-3) is a heterotetramer composed of 2 large adaptins (APL5 and APL6), a medium adaptin (APM3) and a small adaptin (APS3).

The protein resides in the golgi apparatus. It is found in the cytoplasmic vesicle membrane. Functionally, part of the AP-3 complex, an adaptor-related complex which is not clathrin-associated. The complex is associated with the Golgi region as well as more peripheral structures. It facilitates the budding of vesicles from the Golgi membrane and may be directly involved in trafficking to the vacuole. This chain is AP-3 complex subunit sigma (APS3), found in Eremothecium gossypii (strain ATCC 10895 / CBS 109.51 / FGSC 9923 / NRRL Y-1056) (Yeast).